The following is a 548-amino-acid chain: Natural resistance-associated macrophage protein 1 (548 aa).

Residues 1 to 38 (MSGDTGPPKQGGTRYGSISSPPSPEPQQAPPGGTYLSE) are disordered. Topologically, residues 1–55 (MSGDTGPPKQGGTRYGSISSPPSPEPQQAPPGGTYLSEKIPIPDTESGTFSLRKL) are cytoplasmic. A helical transmembrane segment spans residues 56 to 73 (WAFTGPGFLMSIAFLDPG). Over 74 to 82 (NIESDLQAG) the chain is Extracellular. A helical membrane pass occupies residues 83–102 (AVAGFKLLWVLLWATVLGLL). Over 103 to 139 (CQRLAARLGVVTGKDLGEVCHLYYPKVPRILLWLTIE) the chain is Cytoplasmic. A helical transmembrane segment spans residues 140–160 (LAIVGSDMQEVIGTAIAFSLL). At 161 to 164 (SAGR) the chain is on the extracellular side. The helical transmembrane segment at 165–184 (IPLWGGVLITVVDTFFFLFL) threads the bilayer. The Cytoplasmic portion of the chain corresponds to 185–193 (DNYGLRKLE). The helical transmembrane segment at 194–214 (AFFGFLITIMALTFGYEYVVA) threads the bilayer. The Extracellular portion of the chain corresponds to 215-237 (QPAQGALLQGLFLPSCPGCGQPE). The helical transmembrane segment at 238–256 (LLQAVGIIGAIIMPHNIYL) threads the bilayer. Over 257–284 (HSSLVKSREVDRSRRADIREANMYFLIE) the chain is Cytoplasmic. Residues 285 to 304 (ATIALSVSFLINLFVMAVFG) form a helical membrane-spanning segment. Residues 305-346 (QAFYKQTNQAAFNICADSSLHDYAPIFPRNNLTVAVDIYQGG) are Extracellular-facing. A glycan (N-linked (GlcNAc...) asparagine) is linked at N335. The chain crosses the membrane as a helical span at residues 347–366 (VILGCLFGPPALYIWAVGLL). At 367 to 397 (AAGQSSTMTGTYAGQFVMEGFLKLRWSRFAR) the chain is on the cytoplasmic side. A helical membrane pass occupies residues 398–415 (VLLTRSCAILPTVLLAVF). Topologically, residues 416-426 (RDLRDLSGLND) are extracellular. The chain crosses the membrane as a helical span at residues 427–447 (LLNVLQSLLLPFAVLPILTFT). Residues 448–463 (SMPALMQEFANGLVSK) are Cytoplasmic-facing. A helical membrane pass occupies residues 464–485 (VITSSIMVLVCAVNLYFVISYL). Residues 486–493 (PSLPHPAY) are Extracellular-facing. A helical membrane pass occupies residues 494-513 (FSLVALLAAAYLGLTTYLVW). The Cytoplasmic portion of the chain corresponds to 514–548 (TCLITQGATLLAHSSHQRFLYGLPEEDQEKGRTSG).

The protein belongs to the NRAMP family.

It is found in the late endosome membrane. It localises to the lysosome membrane. It catalyses the reaction Zn(2+)(in) + H(+)(out) = Zn(2+)(out) + H(+)(in). The enzyme catalyses Fe(2+)(in) + H(+)(out) = Fe(2+)(out) + H(+)(in). The catalysed reaction is Mn(2+)(in) + H(+)(out) = Mn(2+)(out) + H(+)(in). In terms of biological role, macrophage-specific antiporter that fluxes metal ions in either direction against a proton gradient. Localized to late endosomal lysosomal membranes, delivers bivalent cations from the cytosol into these acidic compartments where they may directly affect antimicrobial activity. Involved in iron metabolism and host natural resistance to infection with intracellular parasites. Pathogen resistance involves sequestration of Fe(2+) and Mn(2+), cofactors of both prokaryotic and eukaryotic catalases and superoxide dismutases, not only to protect the macrophage against its own generation of reactive oxygen species, but to deny the cations to the pathogen for synthesis of its protective enzymes. This Bos taurus (Bovine) protein is Natural resistance-associated macrophage protein 1 (SLC11A1).